Consider the following 121-residue polypeptide: Putative iron-sulfur cluster insertion protein ErpA (121 aa).

Cys-49, Cys-113, and Cys-115 together coordinate iron-sulfur cluster.

This sequence belongs to the HesB/IscA family. As to quaternary structure, homodimer. It depends on iron-sulfur cluster as a cofactor.

Its function is as follows. Required for insertion of 4Fe-4S clusters. The protein is Putative iron-sulfur cluster insertion protein ErpA of Nitrosomonas eutropha (strain DSM 101675 / C91 / Nm57).